The sequence spans 178 residues: Large ribosomal subunit protein bL25 (178 aa).

Belongs to the bacterial ribosomal protein bL25 family. CTC subfamily. As to quaternary structure, part of the 50S ribosomal subunit; part of the 5S rRNA/L5/L18/L25 subcomplex. Contacts the 5S rRNA. Binds to the 5S rRNA independently of L5 and L18.

Its function is as follows. This is one of the proteins that binds to the 5S RNA in the ribosome where it forms part of the central protuberance. In Wolinella succinogenes (strain ATCC 29543 / DSM 1740 / CCUG 13145 / JCM 31913 / LMG 7466 / NCTC 11488 / FDC 602W) (Vibrio succinogenes), this protein is Large ribosomal subunit protein bL25.